Here is a 364-residue protein sequence, read N- to C-terminus: Spermidine/putrescine import ATP-binding protein PotA (364 aa).

Positions 10–244 (IEVVNVSKIF…PAERFVADFI (235 aa)) constitute an ABC transporter domain. An ATP-binding site is contributed by 46–53 (GPSGCGKT).

It belongs to the ABC transporter superfamily. Spermidine/putrescine importer (TC 3.A.1.11.1) family. As to quaternary structure, the complex is composed of two ATP-binding proteins (PotA), two transmembrane proteins (PotB and PotC) and a solute-binding protein (PotD).

The protein resides in the cell inner membrane. The catalysed reaction is ATP + H2O + polyamine-[polyamine-binding protein]Side 1 = ADP + phosphate + polyamineSide 2 + [polyamine-binding protein]Side 1.. In terms of biological role, part of the ABC transporter complex PotABCD involved in spermidine/putrescine import. Responsible for energy coupling to the transport system. The chain is Spermidine/putrescine import ATP-binding protein PotA from Mesorhizobium japonicum (strain LMG 29417 / CECT 9101 / MAFF 303099) (Mesorhizobium loti (strain MAFF 303099)).